A 159-amino-acid chain; its full sequence is Phosphopantetheine adenylyltransferase (159 aa).

Residue Ser9 participates in substrate binding. Residues 9 to 10 and His17 each bind ATP; that span reads SF. 3 residues coordinate substrate: Lys41, Ile73, and Lys87. ATP is bound by residues 88–90, Glu98, and 122–128; these read GLR and WGYVSSS.

The protein belongs to the bacterial CoaD family. Homohexamer. Mg(2+) is required as a cofactor.

It is found in the cytoplasm. It catalyses the reaction (R)-4'-phosphopantetheine + ATP + H(+) = 3'-dephospho-CoA + diphosphate. The protein operates within cofactor biosynthesis; coenzyme A biosynthesis; CoA from (R)-pantothenate: step 4/5. Functionally, reversibly transfers an adenylyl group from ATP to 4'-phosphopantetheine, yielding dephospho-CoA (dPCoA) and pyrophosphate. In Nocardioides sp. (strain ATCC BAA-499 / JS614), this protein is Phosphopantetheine adenylyltransferase.